The sequence spans 163 residues: Nucleotide-binding protein BPUM_1028 (163 aa).

Belongs to the YajQ family.

In terms of biological role, nucleotide-binding protein. The sequence is that of Nucleotide-binding protein BPUM_1028 from Bacillus pumilus (strain SAFR-032).